The sequence spans 60 residues: DNA-directed RNA polymerase subunit Rpo6 (60 aa).

The protein belongs to the archaeal Rpo6/eukaryotic RPB6 RNA polymerase subunit family. Part of the RNA polymerase complex.

It is found in the cytoplasm. It catalyses the reaction RNA(n) + a ribonucleoside 5'-triphosphate = RNA(n+1) + diphosphate. In terms of biological role, DNA-dependent RNA polymerase (RNAP) catalyzes the transcription of DNA into RNA using the four ribonucleoside triphosphates as substrates. The chain is DNA-directed RNA polymerase subunit Rpo6 from Methanothrix thermoacetophila (strain DSM 6194 / JCM 14653 / NBRC 101360 / PT) (Methanosaeta thermophila).